Reading from the N-terminus, the 329-residue chain is MQNQLNALLQSAKKSVADAQSEIVLEEIRVDYLGKKGKLTELLKSVGQMPADQRPLLGKAVNEIKREIQQLLNAKSTQLREKSLQEKLNKEKVDITLRGRYDHLGAIHPISRVSERVSQLFSMLGFQIAEGPEIENEYYNFEALNIPADHPARTMADTFYFSGDKLLRTHTSPVQIREMEKQGVPIRLIALGRVYRRDLDQTHTPMFHQVEGLVIDKRSTFANLKGLLQQFLNCFFEKDVRLRFRPSYFPFTEPSAEVDIYQPRTDKWLEVLGCGMVHPNVLRNLNIDPDEYSGFAFGIGLDRLAMLRYEVTDLRLFFENDLRFLGQFK.

Glutamate 253 serves as a coordination point for Mg(2+).

This sequence belongs to the class-II aminoacyl-tRNA synthetase family. Phe-tRNA synthetase alpha subunit type 1 subfamily. As to quaternary structure, tetramer of two alpha and two beta subunits. The cofactor is Mg(2+).

The protein localises to the cytoplasm. It catalyses the reaction tRNA(Phe) + L-phenylalanine + ATP = L-phenylalanyl-tRNA(Phe) + AMP + diphosphate + H(+). The polypeptide is Phenylalanine--tRNA ligase alpha subunit (Coxiella burnetii (strain CbuK_Q154) (Coxiella burnetii (strain Q154))).